We begin with the raw amino-acid sequence, 311 residues long: 4-diphosphocytidyl-2-C-methyl-D-erythritol kinase (311 aa).

K16 is an active-site residue. P100 to S110 is an ATP binding site. The active site involves D142.

It belongs to the GHMP kinase family. IspE subfamily.

The catalysed reaction is 4-CDP-2-C-methyl-D-erythritol + ATP = 4-CDP-2-C-methyl-D-erythritol 2-phosphate + ADP + H(+). It participates in isoprenoid biosynthesis; isopentenyl diphosphate biosynthesis via DXP pathway; isopentenyl diphosphate from 1-deoxy-D-xylulose 5-phosphate: step 3/6. Functionally, catalyzes the phosphorylation of the position 2 hydroxy group of 4-diphosphocytidyl-2C-methyl-D-erythritol. The chain is 4-diphosphocytidyl-2-C-methyl-D-erythritol kinase from Prochlorococcus marinus (strain AS9601).